Consider the following 291-residue polypeptide: Kidney mitochondrial carrier protein 1 (291 aa).

Serine 2 carries the post-translational modification N-acetylserine. Solcar repeat units follow at residues 7-96 (KPFV…LKRL), 104-189 (ETLL…TKKH), and 198-289 (DTVA…LKKL). Helical transmembrane passes span 9-26 (FVYG…TFPI), 71-89 (GIAP…KIGT), 106-124 (LLVN…SAIA), 164-183 (GVSL…LPVY), 204-224 (FLSS…VDVV), and 264-283 (GFWP…FLTY).

Belongs to the mitochondrial carrier (TC 2.A.29) family. Interacts with VDAC1. In terms of tissue distribution, present in kidney (at protein level). Expressed predominantly within the kidney cortex in the proximal and distal tubules and at lower levels in the testis and white adipose tissue.

It localises to the mitochondrion inner membrane. It carries out the reaction sulfite(in) + sulfate(out) = sulfite(out) + sulfate(in). The enzyme catalyses thiosulfate(in) + sulfate(out) = thiosulfate(out) + sulfate(in). The catalysed reaction is sulfate(out) + phosphate(in) = sulfate(in) + phosphate(out). It catalyses the reaction oxalate(in) + sulfate(out) = oxalate(out) + sulfate(in). It carries out the reaction malonate(in) + sulfate(out) = malonate(out) + sulfate(in). The enzyme catalyses maleate(in) + sulfate(out) = maleate(out) + sulfate(in). The catalysed reaction is (S)-malate(in) + sulfate(out) = (S)-malate(out) + sulfate(in). It catalyses the reaction (3S)-citramalate(in) + sulfate(out) = (3S)-citramalate(out) + sulfate(in). It carries out the reaction (3R)-citramalate(in) + sulfate(out) = (3R)-citramalate(out) + sulfate(in). The enzyme catalyses sulfate(out) + succinate(in) = sulfate(in) + succinate(out). The catalysed reaction is (S,S)-tartrate(in) + sulfate(out) = (S,S)-tartrate(out) + sulfate(in). It catalyses the reaction (2R,3R)-tartrate(in) + sulfate(out) = (2R,3R)-tartrate(out) + sulfate(in). It carries out the reaction D-aspartate(in) + sulfate(out) = D-aspartate(out) + sulfate(in). The enzyme catalyses L-aspartate(in) + sulfate(out) = L-aspartate(out) + sulfate(in). The catalysed reaction is sulfate(in) = sulfate(out). It catalyses the reaction phosphate(in) = phosphate(out). It carries out the reaction (S)-malate(out) = (S)-malate(in). In terms of biological role, antiporter that transports inorganic anions (sulfate, sulfite, thiosulfate and phosphate) and, to a lesser extent, a variety of dicarboxylates (e.g. malonate, malate and citramalate) and, even more so, aspartate. The sulfate/sulfate exchange is much higher than the phosphate/phosphate and malate/malate exchanges. The transport affinities is higher for sulfate and thiosulfate than for any other substrate. May catalyze the export of sulfite and thiosulfate (the hydrogen sulfide degradation products) from the mitochondria, thereby modulating the level of the hydrogen sulfide. Also may mediate a very low unidirectional transport of sulfate, phosphate and (S)-malate. In Mus musculus (Mouse), this protein is Kidney mitochondrial carrier protein 1.